Reading from the N-terminus, the 257-residue chain is uncharacterized protein (257 aa).

A signal peptide spans 1–22 (MIHSKRLRLWLYLVLLAVFIGA). The N-palmitoyl cysteine moiety is linked to residue cysteine 23. A lipid anchor (S-diacylglycerol cysteine) is attached at cysteine 23.

It belongs to the staphylococcal tandem lipoprotein family.

Its subcellular location is the cell membrane. This is an uncharacterized protein from Staphylococcus aureus (strain NCTC 8325 / PS 47).